The sequence spans 144 residues: Universal stress protein F (144 aa).

This sequence belongs to the universal stress protein A family. Homodimer.

This chain is Universal stress protein F (uspF), found in Salmonella typhi.